Consider the following 165-residue polypeptide: Crossover junction endodeoxyribonuclease RuvC (165 aa).

Active-site residues include aspartate 6, glutamate 67, and aspartate 142. Mg(2+) contacts are provided by aspartate 6, glutamate 67, and aspartate 142.

The protein belongs to the RuvC family. In terms of assembly, homodimer which binds Holliday junction (HJ) DNA. The HJ becomes 2-fold symmetrical on binding to RuvC with unstacked arms; it has a different conformation from HJ DNA in complex with RuvA. In the full resolvosome a probable DNA-RuvA(4)-RuvB(12)-RuvC(2) complex forms which resolves the HJ. It depends on Mg(2+) as a cofactor.

The protein localises to the cytoplasm. It catalyses the reaction Endonucleolytic cleavage at a junction such as a reciprocal single-stranded crossover between two homologous DNA duplexes (Holliday junction).. Its function is as follows. The RuvA-RuvB-RuvC complex processes Holliday junction (HJ) DNA during genetic recombination and DNA repair. Endonuclease that resolves HJ intermediates. Cleaves cruciform DNA by making single-stranded nicks across the HJ at symmetrical positions within the homologous arms, yielding a 5'-phosphate and a 3'-hydroxyl group; requires a central core of homology in the junction. The consensus cleavage sequence is 5'-(A/T)TT(C/G)-3'. Cleavage occurs on the 3'-side of the TT dinucleotide at the point of strand exchange. HJ branch migration catalyzed by RuvA-RuvB allows RuvC to scan DNA until it finds its consensus sequence, where it cleaves and resolves the cruciform DNA. This chain is Crossover junction endodeoxyribonuclease RuvC, found in Chlamydia abortus (strain DSM 27085 / S26/3) (Chlamydophila abortus).